Consider the following 454-residue polypeptide: Replicative DNA helicase DnaB (454 aa).

Positions 1 to 149 (MSELFSERIP…LDEADRKIME (149 aa)) are N-terminal domain (NTD). A linker helix region spans residues 163 to 176 (KDILVQTYDNIEML). Residues 179–445 (RDGEITGIPT…NKFVNLERRF (267 aa)) form the SF4 helicase domain. A C-terminal domain (CTD) region spans residues 183 to 454 (ITGIPTGFTE…FDEAQIPPGA (272 aa)). ATP is bound by residues serine 213, glycine 215, lysine 216, threonine 217, and alanine 218. Catalysis depends on glutamate 241, which acts as the Nucleophile. The ATP site is built by arginine 250 and glutamine 362. Residues arginine 381, glutamate 382, and glycine 384 each contribute to the ssDNA site. Positions 418, 419, and 420 each coordinate ATP.

It belongs to the helicase family. DnaB subfamily. Homohexamer. Interacts with DnaG primase, as DnaB(6):DnaG(3). Interacts with the N-terminus of DnaI (shown with DnaI of B.subtilis), forms a helicase DnaB(6):DnaI(6) complex. The DnaB-DnaI complex is disrupted by DnaD (DnaD and DnaI from B.subtilis). A stable complex DnaI(6):DnaB(6):DnaG(3) fragment can be isolated; DnaI and DnaG do not contact each other (DnaI in this complex is derived from B.subtilis). Forms a complex with DNA clamp loader protein tau (shown with B.subtilis HolA) tau(3):DnaB(6); a single ATP hydrolysis even is sufficient for complex formation.

The enzyme catalyses Couples ATP hydrolysis with the unwinding of duplex DNA at the replication fork by translocating in the 5'-3' direction. This creates two antiparallel DNA single strands (ssDNA). The leading ssDNA polymer is the template for DNA polymerase III holoenzyme which synthesizes a continuous strand.. It catalyses the reaction ATP + H2O = ADP + phosphate + H(+). Its function is as follows. The main replicative DNA helicase, it participates in initiation and elongation during chromosome replication. Travels ahead of the DNA replisome, separating double-stranded (ds)DNA into templates for DNA synthesis. Binding of single-stranded (ss)DNA to the hexamer suggests a 2-nucleotide step size for the helicase and a hand-over-hand mechanism of DNA unwinding. Has ssDNA-stimulated ATPase activity. DnaG primase stimulates the helicase activity (the helicase direction was not determine but is probably 5'-3'). Loaded onto DNA by helicase loader DnaI (shown with DnaI of B.subtilis); ATP-binding enhances loading and subsequent ATP hydrolysis dissociates the complex, leaving helicase on the DNA. Binds ssDNA and less well dsDNA, in the presence of ADPNP (probably 5'-adenylyl beta, gamma-imidodiphosphate, but not ATP) binding to both DNAs is improved. This chain is Replicative DNA helicase DnaB, found in Geobacillus stearothermophilus (Bacillus stearothermophilus).